Consider the following 539-residue polypeptide: Chaperonin GroEL (539 aa).

ATP-binding positions include 29–32 (TLGP), 86–90 (DGTTT), glycine 412, 475–477 (NAA), and aspartate 491.

This sequence belongs to the chaperonin (HSP60) family. In terms of assembly, forms a cylinder of 14 subunits composed of two heptameric rings stacked back-to-back. Interacts with the co-chaperonin GroES.

The protein localises to the cytoplasm. The catalysed reaction is ATP + H2O + a folded polypeptide = ADP + phosphate + an unfolded polypeptide.. Its function is as follows. Together with its co-chaperonin GroES, plays an essential role in assisting protein folding. The GroEL-GroES system forms a nano-cage that allows encapsulation of the non-native substrate proteins and provides a physical environment optimized to promote and accelerate protein folding. The polypeptide is Chaperonin GroEL (Tsukamurella tyrosinosolvens).